A 476-amino-acid chain; its full sequence is Cysteine--tRNA ligase (476 aa).

Residue C30 participates in Zn(2+) binding. A 'HIGH' region motif is present at residues 32–42; the sequence is PTVYNYIHIGN. Positions 215, 240, and 244 each coordinate Zn(2+). A 'KMSKS' region motif is present at residues 274 to 278; sequence KMSKS. Residue K277 coordinates ATP.

The protein belongs to the class-I aminoacyl-tRNA synthetase family. As to quaternary structure, monomer. The cofactor is Zn(2+).

The protein localises to the cytoplasm. It catalyses the reaction tRNA(Cys) + L-cysteine + ATP = L-cysteinyl-tRNA(Cys) + AMP + diphosphate. In Lactobacillus helveticus (strain DPC 4571), this protein is Cysteine--tRNA ligase.